Consider the following 1494-residue polypeptide: MGNKIARTTQVSATEYYLHDLPSSYNLVLKEVLGRGRFLKSIQCKHDEGLVVVKVYFKRGDSIDLREYERRLVKIKDVFLSLEHPHVWPFQFWQETDKAAYLVRQYFYSNLHDRLSTRPFLSLVEKKWLAFQLLLAVKQCHEKDICHGDIKCENVLLTSWNWLYLADFASFKPTYIPYDDPSDFSFFFDTRGQRLCYLAPERFYEHGGETQVAQDAPLKPSMDIFAVGCVIAELFLEGQPLFELAQLLAYRRGQHDPSQHLEKIPDPGIRKMILHMIQLEPEARLSAEDYLQNYVGVVFPNYFSPFLHTLYCCWNPLPSDMRVATCQGIFQEILKKMMENKSGDEIGVDSPVTSNPMNASTVQETFANHKLNSSKDLIRNTVNSKDEIFYSISDALKKNRHPFLKKITMDDLGTLMSLYDSRSDTYGTPFLPVEGNMRCEGMVLIASMLCSCIRNIKLPHLRREAILLLRSCSLYIDDDDRLQRVLPYVVALLSDPTAIVRCAAMETLCDILPLVRDFPPSDAKIFPEYIFPMLSMLPEDTEESVRICYASNIAKLALTAYGFLIHSFQLSDVGVLNELNSQQISTTPASETPSHLQKANGNAQLQQLRKTIAEVVQELVMGPKQTPNVRRALLQDIGELCFFFGQRQSNDFLLPILPAFLNDRDEQLRSVFFEKIVYVCFFVGQRSVEEYLLPYIDQALSDQTEAVIVNALECLSTLCKSSFLRKRALLQMIECVYPLLCYPSQWVRRAVVTFIAASSECLGAVDSYAFIAPVIRSYLSRLPASIASEEGLLSCLKPPVTREVVYRIFEKTRNPEFMAKQRKMWYSSSPQSKDWESVDLFDKDAGELNSVECRAEQKQSVEGKKQIKSASKQPEVQGKYAEKDAKLRIPRNPRPNASNTVELRDPVYPEKLQFSGFMAPYVSGANSFIEPENIPLYSFSMDKRAATNPPVASESSLQMNSLGMGSLSVPWMDSMSKSFNLASSVPVPKLISGSFHVGTNPKQFYRVVHEPESRENDQISSAISKFQDLGVSSSSKSASVTSEDASSPADLVGEPSLSRTSVPDSGWKPRGVLVAHLQEHRSAVNDIATSSDHSFFVSASDDSTVKVWDSRKLEKDISFRSRLTYHLEGSRGMCTTMLRNSTQVVVGASDGVIHMFSIDHISRGLGNVVEKYSGIVDIKKKDVKEGALVSLLNYTADSLSGPMVMYSTQNCGIHLWDTRSDLDAWTLKANPEEGYVSSLVTSPCGNWFVSGSSRGVLTLWDLRFRVPVNSWQYPIICPIEKMCLCFLPPSVSVSTTMKPLIYVAAGCNEVSLWNAEGGSCHQVLRVANYENETDVSEFQWKLPSNKVNPKPNHRQNMSSKYRIEELNEPPPRLPGIRSLLPLPGGDLLTGGTDLKIRRWDYSSPERSYCICGPSLKGVGNDDFYELKTNTGVQFVQETKRRPLATKLTAKAVLAAAATDTAGCHRDSVQSLASVKLNQRLLISSSRDGAIKVWK.

Glycine 2 carries N-myristoyl glycine lipidation. Positions 27-307 (LVLKEVLGRG…VFPNYFSPFL (281 aa)) constitute a Protein kinase domain. Residues 33–41 (LGRGRFLKS) and lysine 54 contribute to the ATP site. Aspartate 149 (proton acceptor) is an active-site residue. HEAT repeat units lie at residues 383 to 421 (NSKD…LYDS), 480 to 517 (DRLQ…LVRD), 524 to 562 (KIFP…TAYG), 610 to 646 (KTIA…FFGQ), 648 to 685 (QSND…FVGQ), 687 to 724 (SVEE…SSFL), and 727 to 764 (RALL…CLGA). 2 disordered regions span residues 859-903 (QSVE…TVEL) and 1037-1064 (SASV…SVPD). Residues 1037-1047 (SASVTSEDASS) are compositionally biased toward low complexity. WD repeat units lie at residues 1079–1118 (EHRS…KDIS), 1127–1166 (LEGS…RGLG), 1184–1226 (KEGA…DAWT), 1231–1270 (PEEG…PVNS), 1276–1323 (ICPI…CHQV), 1371–1409 (PRLP…RSYC), and 1466–1494 (DSVQ…KVWK).

The protein belongs to the protein kinase superfamily. Ser/Thr protein kinase family. In terms of assembly, interacts with VPS34. Component of a complex made of VPS38/USL1 and PI3K main subunits such as VPS15, ATG6/VPS30 and VPS34. Post-translationally, autophosphorylated. Mainly expressed in anthers, pollen grains and pollen tubes, and, to a lower extent, in other tissues and organs including seedlings, roots, stems, leaves, flowers, pitils and siliques.

It is found in the cytoplasm. It localises to the golgi apparatus. The protein resides in the trans-Golgi network membrane. The protein localises to the endosome membrane. The catalysed reaction is L-seryl-[protein] + ATP = O-phospho-L-seryl-[protein] + ADP + H(+). The enzyme catalyses L-threonyl-[protein] + ATP = O-phospho-L-threonyl-[protein] + ADP + H(+). Its function is as follows. Serine/threonine-protein kinase required for cytoplasm to vacuole transport (Cvt) and autophagy as a part of the autophagy-specific VPS34 PI3-kinase complex I. Required for pollen development and germination, probably via the modulation of phosphatidylinositol 3-phosphate (PI3P) formation and vacuolar organization. This chain is Serine/threonine-protein kinase VPS15, found in Arabidopsis thaliana (Mouse-ear cress).